We begin with the raw amino-acid sequence, 331 residues long: Ribosomal RNA small subunit methyltransferase H (331 aa).

S-adenosyl-L-methionine contacts are provided by residues 38–40 (GGY), aspartate 56, phenylalanine 83, aspartate 100, and glutamine 107. The segment at 287–331 (DEAELAENPRARSARLRVGVRTDAPAGKVDPQALGTPLIPKKGRR) is disordered.

This sequence belongs to the methyltransferase superfamily. RsmH family.

The protein localises to the cytoplasm. The enzyme catalyses cytidine(1402) in 16S rRNA + S-adenosyl-L-methionine = N(4)-methylcytidine(1402) in 16S rRNA + S-adenosyl-L-homocysteine + H(+). Specifically methylates the N4 position of cytidine in position 1402 (C1402) of 16S rRNA. This chain is Ribosomal RNA small subunit methyltransferase H, found in Cereibacter sphaeroides (strain KD131 / KCTC 12085) (Rhodobacter sphaeroides).